The sequence spans 593 residues: SPI-1 type 3 secretion system translocon protein SctE (593 aa).

Coiled coils occupy residues 151–208 (DTAK…ATDA) and 287–314 (EGRQ…NRIM). 2 helical membrane-spanning segments follow: residues 330–350 (VVAA…GLAV) and 409–429 (IVGA…VAVV).

The protein belongs to the SctE/SipB/YopB family. As to quaternary structure, the core secretion machinery of the T3SS is composed of approximately 20 different proteins, including cytoplasmic components, a base, an export apparatus and a needle. This subunit is involved in the formation of a pore, called the translocon, in host membrane.

Its subcellular location is the secreted. It localises to the host membrane. It is found in the host cell. Component of the type III secretion system 1 (SPI-1 T3SS), also called injectisome, which is used to inject bacterial effector proteins into eukaryotic host cells. SipB/SctE1 and SipC/SctB are inserted into the host membrane where they form a pore and allow the translocation of effector proteins into the cytosol of target cells. In terms of biological role, induces macrophage apoptosis either by binding and activating the proapoptotic enzyme caspase-1 (caspase-1 dependent), resulting in the release of interleukin-1 beta active form, or by disrupting mitochondria and inducing autophagy (caspase-1 independent). The former is dependent of its membrane-fusion activity. The polypeptide is SPI-1 type 3 secretion system translocon protein SctE (Salmonella typhi).